Reading from the N-terminus, the 343-residue chain is Uroporphyrinogen decarboxylase (343 aa).

Substrate is bound by residues 23–27 (RQAGR), D73, Y151, S206, and H319.

Belongs to the uroporphyrinogen decarboxylase family. In terms of assembly, homodimer.

It is found in the cytoplasm. The catalysed reaction is uroporphyrinogen III + 4 H(+) = coproporphyrinogen III + 4 CO2. It participates in porphyrin-containing compound metabolism; protoporphyrin-IX biosynthesis; coproporphyrinogen-III from 5-aminolevulinate: step 4/4. Its function is as follows. Catalyzes the decarboxylation of four acetate groups of uroporphyrinogen-III to yield coproporphyrinogen-III. This is Uroporphyrinogen decarboxylase from Sulfurimonas denitrificans (strain ATCC 33889 / DSM 1251) (Thiomicrospira denitrificans (strain ATCC 33889 / DSM 1251)).